The sequence spans 189 residues: Small ribosomal subunit protein uS5 (189 aa).

The S5 DRBM domain occupies 20-83 (FMDRLVHINR…ESAKRSLIRV (64 aa)).

This sequence belongs to the universal ribosomal protein uS5 family. Part of the 30S ribosomal subunit. Contacts proteins S4 and S8.

Its function is as follows. With S4 and S12 plays an important role in translational accuracy. Located at the back of the 30S subunit body where it stabilizes the conformation of the head with respect to the body. The chain is Small ribosomal subunit protein uS5 from Methylocella silvestris (strain DSM 15510 / CIP 108128 / LMG 27833 / NCIMB 13906 / BL2).